The primary structure comprises 82 residues: CLAVATA3/ESR (CLE)-related protein 53 (82 aa).

Residues 1 to 26 (MATSTNSREFLIFICVLTLLVVRSEA) form the signal peptide. Pro74 and Pro77 each carry hydroxyproline. Residue Pro77 is glycosylated (O-linked (Ara...) hydroxyproline).

It belongs to the CLV3/ESR signal peptide family. In terms of processing, the O-glycosylation (arabinosylation) of the hydroxyproline Pro-77 enhances binding affinity of the CLE53p peptide for its receptor. As to expression, expressed in root vasculature.

Its subcellular location is the secreted. It is found in the extracellular space. Its function is as follows. Signaling peptide involved in the regulation of root colonization by arbuscular mycorrhizal (AM) fungi. Moves from root to shoot to function with the receptor kinase SUNN, in a signaling pathway that repress strigolactone biosynthetic genes and strigolactone content in the roots, and consequently reduces the promotion of further colonization by AM fungi. The sequence is that of CLAVATA3/ESR (CLE)-related protein 53 from Medicago truncatula (Barrel medic).